A 93-amino-acid polypeptide reads, in one-letter code: Large ribosomal subunit protein uL23cz/uL23cy (93 aa).

It belongs to the universal ribosomal protein uL23 family. Part of the 50S ribosomal subunit.

Its subcellular location is the plastid. The protein localises to the chloroplast. Functionally, binds to 23S rRNA. The protein is Large ribosomal subunit protein uL23cz/uL23cy (rpl23-A) of Piper cenocladum (Ant piper).